The chain runs to 96 residues: Large ribosomal subunit protein eL21 (96 aa).

It belongs to the eukaryotic ribosomal protein eL21 family.

This Methanoregula boonei (strain DSM 21154 / JCM 14090 / 6A8) protein is Large ribosomal subunit protein eL21.